The primary structure comprises 155 residues: Protein FAM201A (155 aa).

Positions 130-155 are disordered; the sequence is QDQGCGQHRPHSPRLVDIALPGGGWT.

This is Protein FAM201A (FAM201A) from Homo sapiens (Human).